A 154-amino-acid polypeptide reads, in one-letter code: Probable biofilm-surface layer protein B (154 aa).

The signal sequence occupies residues 1 to 30; it reads MLKRTSFVSSLFISSAVLLSILLPSGQAHA.

This sequence belongs to the BslA/BslB family. Monomer in vitro.

It is found in the secreted. Functionally, has a minor role in biofilm architecture. May contribute to the surface hydrophobicity. The sequence is that of Probable biofilm-surface layer protein B from Bacillus subtilis (strain 168).